The chain runs to 270 residues: MKILSLSLLLLLAATVSHVQSSASVPGLIELLESNTIFGNEAELLEKEGLSINYPNCRSWHLGVETSNIINFDTVPANCKAYVEDYLITSKQYQYDSKTVNKEAYFYAKGLALKNDTVNVWIFDLDDTLLSSIPYYAKYGYGTENTAPGAYWSWLESGESTPGLPETLHLYENLLELGIEPIIISDRWKKLSEVTVENLKAVGVTKWKHLILKPNGSKLTQVVYKSKVRNSLVKKGYNIVGNIGDQWADLVEDTPGRVFKLPNPLYYVPS.

Positions 1–17 are cleaved as a signal peptide; sequence MKILSLSLLLLLAATVS. N115 and N215 each carry an N-linked (GlcNAc...) asparagine glycan.

The protein belongs to the APS1/VSP family. In terms of tissue distribution, expressed in leaves and in gynoecia, especially in styles, the basal and distal ends of ovaries and in siliques.

May function as somatic storage protein during early seedling development. The sequence is that of Vegetative storage protein 1 (VSP1) from Arabidopsis thaliana (Mouse-ear cress).